Consider the following 460-residue polypeptide: Proton extrusion protein PxcA (460 aa).

Residues 84-194 (RLPDPEQNGS…KTNLDNSNAP (111 aa)) are disordered. Over residues 114–136 (NDGKDAENGRQSRDPSILEKLEF) the composition is skewed to basic and acidic residues. Over residues 167–194 (LTSSQPEPSDPSIKTNLAKTNLDNSNAP) the composition is skewed to polar residues. 4 helical membrane-spanning segments follow: residues 242–262 (FLLLLAILPLLVQIFSKHFLF), 337–357 (GLKNVLADVLSLLVFGWLILI), 373–393 (IYGLSDSAKAFIIILFTDVFV), and 420–440 (FIYGFIATFPVFLDTLFKYWI).

It belongs to the CemA family.

It is found in the cell inner membrane. In terms of biological role, required for H(+) efflux immediately after light irradiation to form a rapid H(+) concentration gradient across the thylakoid membranes. Together with PxcL, contributes to transient H(+) uptake following dark to light transition. This chain is Proton extrusion protein PxcA, found in Synechococcus sp. (strain JA-3-3Ab) (Cyanobacteria bacterium Yellowstone A-Prime).